The sequence spans 138 residues: Beta-galactosidase (138 aa).

The protein belongs to the glycosyl hydrolase 2 family.

It carries out the reaction Hydrolysis of terminal non-reducing beta-D-galactose residues in beta-D-galactosides.. This chain is Beta-galactosidase (lacZ), found in Rhizobium radiobacter (Agrobacterium tumefaciens).